Reading from the N-terminus, the 536-residue chain is Probable monofunctional riboflavin biosynthesis protein RIBA 3, chloroplastic (536 aa).

Residues 1-43 (MDRVLLSSQLSSQTVVNTRVQQGSGGINSIGFAVIRKGSLKLR) constitute a chloroplast transit peptide. The segment at 44–310 (CYAIGGLGGG…IADLIRYRRK (267 aa)) is inactive DHBP synthase. D-ribulose 5-phosphate is bound by residues 133-134 (GD), Asp138, and 248-252 (RAGHT). Residues 311–536 (REKLVELIAV…GDQDEDDTHN (226 aa)) are GTP cyclohydrolase II. 361 to 365 (RVHSE) provides a ligand contact to GTP. Residues Cys366, Cys377, and Cys379 each contribute to the Zn(2+) site. Residues Gln382, 405–407 (EGR), and Thr427 each bind GTP. The Proton acceptor; for GTP cyclohydrolase activity role is filled by Asp439. Arg441 serves as the catalytic Nucleophile; for GTP cyclohydrolase activity. Positions 462 and 467 each coordinate GTP. Residues 507–536 (YGSDLPGNVPEEFLNPDDIAGDQDEDDTHN) are disordered. Over residues 525 to 536 (IAGDQDEDDTHN) the composition is skewed to acidic residues.

In the N-terminal section; belongs to the DHBP synthase family. This sequence in the C-terminal section; belongs to the GTP cyclohydrolase II family. It depends on Zn(2+) as a cofactor.

Its subcellular location is the plastid. The protein resides in the chloroplast. The catalysed reaction is GTP + 4 H2O = 2,5-diamino-6-hydroxy-4-(5-phosphoribosylamino)-pyrimidine + formate + 2 phosphate + 3 H(+). It participates in cofactor biosynthesis; riboflavin biosynthesis; 5-amino-6-(D-ribitylamino)uracil from GTP: step 1/4. Functionally, involved in riboflavin biosynthesis. Catalyzes the conversion of GTP to 2,5-diamino-6-ribosylamino-4(3H)-pyrimidinone 5'-phosphate (DARP), formate and pyrophosphate. The sequence is that of Probable monofunctional riboflavin biosynthesis protein RIBA 3, chloroplastic (RIBA3) from Oryza sativa subsp. japonica (Rice).